A 148-amino-acid chain; its full sequence is Deoxyuridine 5'-triphosphate nucleotidohydrolase (148 aa).

Substrate contacts are provided by residues 67 to 69 (RSG), N80, 84 to 86 (LID), and M94.

The protein belongs to the dUTPase family. It depends on Mg(2+) as a cofactor.

It catalyses the reaction dUTP + H2O = dUMP + diphosphate + H(+). The protein operates within pyrimidine metabolism; dUMP biosynthesis; dUMP from dCTP (dUTP route): step 2/2. Its function is as follows. This enzyme is involved in nucleotide metabolism: it produces dUMP, the immediate precursor of thymidine nucleotides and it decreases the intracellular concentration of dUTP so that uracil cannot be incorporated into DNA. This is Deoxyuridine 5'-triphosphate nucleotidohydrolase from Burkholderia mallei (strain NCTC 10247).